The sequence spans 247 residues: Cell division protein ZapD (247 aa).

This sequence belongs to the ZapD family. As to quaternary structure, interacts with FtsZ.

It localises to the cytoplasm. Its function is as follows. Cell division factor that enhances FtsZ-ring assembly. Directly interacts with FtsZ and promotes bundling of FtsZ protofilaments, with a reduction in FtsZ GTPase activity. This Shigella dysenteriae serotype 1 (strain Sd197) protein is Cell division protein ZapD.